The primary structure comprises 162 residues: Endoribonuclease YbeY (162 aa).

Zn(2+)-binding residues include histidine 128, histidine 132, and histidine 138.

The protein belongs to the endoribonuclease YbeY family. Zn(2+) is required as a cofactor.

It is found in the cytoplasm. Single strand-specific metallo-endoribonuclease involved in late-stage 70S ribosome quality control and in maturation of the 3' terminus of the 16S rRNA. In Lactococcus lactis subsp. cremoris (strain MG1363), this protein is Endoribonuclease YbeY.